The sequence spans 410 residues: Cysteine desulfurase IscS (410 aa).

Residues 80–81, Asn160, Gln188, and 208–210 each bind pyridoxal 5'-phosphate; these read AT and SGH. Lys211 bears the N6-(pyridoxal phosphate)lysine mark. Residue Thr248 participates in pyridoxal 5'-phosphate binding. Cys334 acts as the Cysteine persulfide intermediate in catalysis. Residue Cys334 coordinates [2Fe-2S] cluster.

Belongs to the class-V pyridoxal-phosphate-dependent aminotransferase family. NifS/IscS subfamily. As to quaternary structure, homodimer. Forms a heterotetramer with IscU, interacts with other sulfur acceptors. The cofactor is pyridoxal 5'-phosphate.

It is found in the cytoplasm. The enzyme catalyses (sulfur carrier)-H + L-cysteine = (sulfur carrier)-SH + L-alanine. Its pathway is cofactor biosynthesis; iron-sulfur cluster biosynthesis. In terms of biological role, master enzyme that delivers sulfur to a number of partners involved in Fe-S cluster assembly, tRNA modification or cofactor biosynthesis. Catalyzes the removal of elemental sulfur atoms from cysteine to produce alanine. Functions as a sulfur delivery protein for Fe-S cluster synthesis onto IscU, an Fe-S scaffold assembly protein, as well as other S acceptor proteins. This chain is Cysteine desulfurase IscS, found in Rickettsia bellii (strain OSU 85-389).